A 417-amino-acid polypeptide reads, in one-letter code: Calreticulin (417 aa).

Positions 1–17 (MLLSVPLLLGLLGLAAA) are cleaved as a signal peptide. The segment at 18-197 (EPAVYFKEQF…NSQVESGSLE (180 aa)) is N-domain. Gln-26 provides a ligand contact to Ca(2+). The residue at position 48 (Lys-48) is an N6-acetyllysine. 2 residues coordinate Ca(2+): Lys-62 and Lys-64. Position 64 is an N6-(2-hydroxyisobutyryl)lysine (Lys-64). An intrachain disulfide couples Cys-105 to Cys-137. Tyr-109, Lys-111, Tyr-128, and Asp-135 together coordinate an alpha-D-glucoside. An N6-acetyllysine modification is found at Lys-159. A 1-1 repeat occupies 191–202 (VESGSLEDDWDF). The interval 191–255 (VESGSLEDDW…DAKKPEDWDE (65 aa)) is 4 X approximate repeats. A disordered region spans residues 193-277 (SGSLEDDWDF…NPEYKGEWKP (85 aa)). The interval 198-308 (DDWDFLPPKK…YSPDANIYAY (111 aa)) is P-domain. Residues 207 to 251 (KIKDPDAAKPEDWDERAKIDDPTDSKPEDWDKPEHIPDPDAKKPE) are compositionally biased toward basic and acidic residues. Lys-209 is subject to N6-acetyllysine. A run of 6 repeats spans residues 210–221 (DPDAAKPEDWDE), 227–238 (DPTDSKPEDWDK), 244–255 (DPDAKKPEDWDE), 259–269 (GEWEPPVIQNP), 273–283 (GEWKPRQIDNP), and 287–297 (GTWIHPEIDNP). The segment at 237–270 (DKPEHIPDPDAKKPEDWDEEMDGEWEPPVIQNPE) is interaction with PPIB. Acidic residues predominate over residues 252–261 (DWDEEMDGEW). Residues 259–297 (GEWEPPVIQNPEYKGEWKPRQIDNPDYKGTWIHPEIDNP) are 3 X approximate repeats. Residues 309 to 417 (DSFAVLGLDL…TTPGQTKDEL (109 aa)) form a C-domain region. Asp-317 contacts an alpha-D-glucoside. Asp-328 contributes to the Ca(2+) binding site. The segment at 350–417 (TKASEKQMKD…TTPGQTKDEL (68 aa)) is disordered. The segment covering 352 to 379 (ASEKQMKDKQDEEQRLKEEEEDKKRKEE) has biased composition (basic and acidic residues). Acidic residues predominate over residues 380–408 (EEAEDKEDEDDRDEDEEDEDEKEEDEEDT). A Prevents secretion from ER motif is present at residues 414-417 (KDEL).

This sequence belongs to the calreticulin family. In terms of assembly, monomer. Component of an EIF2 complex at least composed of CELF1/CUGBP1, CALR, CALR3, EIF2S1, EIF2S2, HSP90B1 and HSPA5. Interacts with PDIA3/ERp57 and SPACA9. Interacts with TRIM21. Interacts with NR3C1. Interacts with PPIB. Interacts (via P-domain) with PDIA5. Interacts with GABARAP. Interacts with CLCC1.

The protein resides in the endoplasmic reticulum lumen. Its subcellular location is the cytoplasm. The protein localises to the cytosol. It localises to the cytolytic granule. It is found in the secreted. The protein resides in the extracellular space. Its subcellular location is the extracellular matrix. The protein localises to the cell surface. It localises to the sarcoplasmic reticulum lumen. It is found in the cytoplasmic vesicle. The protein resides in the secretory vesicle. Its subcellular location is the cortical granule. Functionally, calcium-binding chaperone that promotes folding, oligomeric assembly and quality control in the endoplasmic reticulum (ER) via the calreticulin/calnexin cycle. This lectin interacts transiently with almost all of the monoglucosylated glycoproteins that are synthesized in the ER. Interacts with the DNA-binding domain of NR3C1 and mediates its nuclear export. Involved in maternal gene expression regulation. May participate in oocyte maturation via the regulation of calcium homeostasis. Present in the cortical granules of non-activated oocytes, is exocytosed during the cortical reaction in response to oocyte activation and might participate in the block to polyspermy. The chain is Calreticulin (CALR) from Cricetulus griseus (Chinese hamster).